Reading from the N-terminus, the 1113-residue chain is MLEADLVSKMLRAVLQSHKNGIVLPRLQGEYRSLTGDWIPFKQLGYPTLEAYLRSVPAVVRIEASRSGEIVCYAVACTETARIAQLVARQRTSKRKTGRQINCQMRVKKTMPFFLEGKPKATLRQPGFASDYSISKKPNPTLLREKGSTLGAKADVDMPPYPDAPVQRHVSMSANSSVTVLRSHPEASKLQFMGYSPKPHCLLLFSPKSSLPAPFQTHISRACPKEVNDNLNQTVEKPNVTPPASYTNKMDEVQNRIKEILDKHNNGIWISKLPHFYKEFYKEDLNQGVLQQFEHWPHICTVEKPCGGGQDLLLYPAKREQPLRSDQDPEKERPPPPPAPRQEVPSKGSPAVMPDVKEKVAELLGKYSSGLWASALPKAFEDMYKVKFPEDALKNLASLSDVCTINYISGNTQKAILYAKLPLPTDKILKDEAQAQGDFDIKSMIEQEYLQIEKNMAESADDFVEDITVPPLVIPTEASPSVLVVELSNTNDVVIRYVGKDYSAAQELMEDEMKEYYSRNPRVTPIQTVHVGQLLAVNAEEDAWLRAQIISTDENKIKVCYVDYGFCENIEKSKAYRLNPRFCSLSFQATKCKLAGLEILNDDPNLVKVVESLTCGKIFAVEILDKSDIPLVVLYDTSGEDDININATCLKAICDRSLEVHLQVDAMYTNVKVTNICSDGTLYCQVPCKGLNKLNDLLHKTEDYFHCKHMTSEYFISLPFCGKICLFHCKGKWLRVEITNVHSSRALDVQFLDSGNSTSVKVSELREIPPRFLQEMLAIPPQAIKCCLADLPQSIGMWTPDAVLWLRDSVLNCSDCSIKVTKVDEARGVAYVYLFTPKNFPDPHRSINRQITNADLWKHQKDVFLSAVSAAASSPGNRNASTPAPGSPAESLRKSHPEVLRKSVLDHTSSFSLEELPPPVHLSKSGEHMDVYVPVACHPGHFVIQPWQEIHKLEVLMEEMILYYSVSEERHIAVERDQVYAAKVENKWYRVLLKGILTNGLVSVYELDYGKHELVNIRKVQPLVDVFRKLPFQAVTAQLAGVKCSQWSEEASMVFRNHVEKKPLVALVQTVIEHANPWDRKVVVYLVDTSLPDTDTWIHDFMSQYLVELSKAN.

2 consecutive HTH OST-type domains span residues 3 to 76 (EADL…YAVA) and 249 to 318 (KMDE…YPAK). A compositionally biased stretch (basic and acidic residues) spans 320–334 (EQPLRSDQDPEKERP). The segment at 320-352 (EQPLRSDQDPEKERPPPPPAPRQEVPSKGSPAV) is disordered. Positions 352 to 421 (VMPDVKEKVA…TQKAILYAKL (70 aa)) constitute an HTH OST-type 3 domain. Tudor domains lie at 528–585 (TVHV…FCSL) and 718–775 (LPFC…FLQE). The segment at 873–895 (SSPGNRNASTPAPGSPAESLRKS) is disordered. Serine 874 carries the phosphoserine modification. The segment covering 875-884 (PGNRNASTPA) has biased composition (polar residues). The segment at 876–1113 (GNRNASTPAP…QYLVELSKAN (238 aa)) is interaction with CDK17. The interval 908-1113 (TSSFSLEELP…QYLVELSKAN (206 aa)) is interaction with CABLES1.

Belongs to the TDRD7 family. In terms of assembly, found in a mRNP complex, at least composed of TDRD1, TDRD6, TDRD7 and DDX4. Found in a complex containing CABLES1, CDK16 and CDK17. Interacts with CABLES1, CDK17 and PIWIL1. As to expression, expressed in brain and testis.

The protein resides in the cytoplasm. In terms of biological role, component of specific cytoplasmic RNA granules involved in post-transcriptional regulation of specific genes: probably acts by binding to specific mRNAs and regulating their translation. Required for lens transparency during lens development, by regulating translation of genes such as CRYBB3 and HSPB1 in the developing lens. Also required during spermatogenesis. The sequence is that of Tudor domain-containing protein 7 (Tdrd7) from Rattus norvegicus (Rat).